A 259-amino-acid chain; its full sequence is Proteasome subunit alpha (259 aa).

It belongs to the peptidase T1A family. As to quaternary structure, the 20S proteasome core is composed of 14 alpha and 14 beta subunits that assemble into four stacked heptameric rings, resulting in a barrel-shaped structure. The two inner rings, each composed of seven catalytic beta subunits, are sandwiched by two outer rings, each composed of seven alpha subunits. The catalytic chamber with the active sites is on the inside of the barrel. Has a gated structure, the ends of the cylinder being occluded by the N-termini of the alpha-subunits. Is capped at one or both ends by the proteasome regulatory ATPase, PAN.

It localises to the cytoplasm. With respect to regulation, the formation of the proteasomal ATPase PAN-20S proteasome complex, via the docking of the C-termini of PAN into the intersubunit pockets in the alpha-rings, triggers opening of the gate for substrate entry. Interconversion between the open-gate and close-gate conformations leads to a dynamic regulation of the 20S proteasome proteolysis activity. Functionally, component of the proteasome core, a large protease complex with broad specificity involved in protein degradation. The sequence is that of Proteasome subunit alpha from Methanococcus maripaludis (strain DSM 14266 / JCM 13030 / NBRC 101832 / S2 / LL).